A 38-amino-acid chain; its full sequence is DNA binding protein VP8 (38 aa).

The segment covering 1 to 16 (MKRKPMSRKASQKTFK) has biased composition (basic residues). The disordered stretch occupies residues 1 to 38 (MKRKPMSRKASQKTFKKNTGVQRMNHLNPRAMRGGIRL).

Belongs to the microviridae J protein family.

Its subcellular location is the virion. It localises to the host cytoplasm. Its function is as follows. Mediates ssDNA packaging into virion, it locates to the internal surface of the capsid, thereby displacing the internal scaffolding protein VP3 during virion formation. Additionally, protein VP8 plays a role in viral attachment to the host cell. The polypeptide is DNA binding protein VP8 (Bdellovibrio phage phiMH2K (Bacteriophage phiMH2K)).